The primary structure comprises 80 residues: Large ribosomal subunit protein bL31B (80 aa).

The protein belongs to the bacterial ribosomal protein bL31 family. Type B subfamily. In terms of assembly, part of the 50S ribosomal subunit.

The protein is Large ribosomal subunit protein bL31B of Streptococcus pneumoniae serotype 2 (strain D39 / NCTC 7466).